The following is a 380-amino-acid chain: L-prolyl-[peptidyl-carrier protein] dehydrogenase (380 aa).

E243 (proton acceptor) is an active-site residue. Residues R269 and Q280 each contribute to the FAD site.

Belongs to the acyl-CoA dehydrogenase family. FAD serves as cofactor.

The catalysed reaction is L-prolyl-[peptidyl-carrier protein] + 2 oxidized [electron-transfer flavoprotein] + H(+) = (1H-pyrrole-2-carbonyl)-[peptidyl-carrier protein] + 2 reduced [electron-transfer flavoprotein]. Its function is as follows. Involved in the biosynthesis of pyoluteorin. Catalyzes the desaturation of the L-prolyl-[PltL] to yield 1H-pyrrole-2-carbonyl-[PltL]. The chain is L-prolyl-[peptidyl-carrier protein] dehydrogenase from Pseudomonas fluorescens (strain ATCC BAA-477 / NRRL B-23932 / Pf-5).